The sequence spans 190 residues: Lipocalin Can f 6.0101 (190 aa).

The N-terminal stretch at 1-15 (MKLLLLCLGLILVHA) is a signal peptide. Residues 43–54 (SDIKEKIEENGS) are igE-binding. N-linked (GlcNAc...) asparagine glycosylation is found at Asn52 and Asn67. An igE-binding region spans residues 76-83 (TKVNGKCT). Cysteines 82 and 175 form a disulfide. An N-linked (GlcNAc...) asparagine glycan is attached at Asn90. Residues 91–97 (KTEKDGE) are igE-binding. The interval 100–109 (VVHDGYNLFR) is no IgE-binding. 2 igE-binding regions span residues 125-132 (NVNQEQEF) and 139-152 (GRKPDVSPKVKEKF).

Belongs to the calycin superfamily. Lipocalin family. As to quaternary structure, monomer. Expressed in saliva (at protein level). Expressed in dander (at protein level). According to PubMed:22104604, expressed in submaxillary gland. In contrast, according to PubMed:22515174, not expressed in submaxillary gland. Expressed in bladder and skin, but not in tongue.

The protein localises to the secreted. This is Lipocalin Can f 6.0101 from Canis lupus familiaris (Dog).